A 343-amino-acid chain; its full sequence is DNA-directed RNA polymerase subunit alpha (343 aa).

The tract at residues 1-236 (MQEHYYKFWR…EQLQIFLTFD (236 aa)) is alpha N-terminal domain (alpha-NTD). An alpha C-terminal domain (alpha-CTD) region spans residues 253–343 (LNENLFRSVD…QPPQKRETQQ (91 aa)).

This sequence belongs to the RNA polymerase alpha chain family. As to quaternary structure, homodimer. The RNAP catalytic core consists of 2 alpha, 1 beta, 1 beta' and 1 omega subunit. When a sigma factor is associated with the core the holoenzyme is formed, which can initiate transcription.

It carries out the reaction RNA(n) + a ribonucleoside 5'-triphosphate = RNA(n+1) + diphosphate. DNA-dependent RNA polymerase catalyzes the transcription of DNA into RNA using the four ribonucleoside triphosphates as substrates. The chain is DNA-directed RNA polymerase subunit alpha from Bdellovibrio bacteriovorus (strain ATCC 15356 / DSM 50701 / NCIMB 9529 / HD100).